Here is a 490-residue protein sequence, read N- to C-terminus: Sushi domain-containing protein 4 (490 aa).

A disordered region spans residues 1–20 (MYHGMNPSNGDGFLEQQLQQ). Positions 1-41 (MYHGMNPSNGDGFLEQQLQQQQPQSPQRLLAVILWFQLALC) are cleaved as a signal peptide. Over 42–319 (FGPAQLTGGF…PSTHETLLTT (278 aa)) the chain is Extracellular. Sushi domains lie at 55 to 119 (NVCA…VCIQ), 120 to 179 (EDCR…ICQG), 178 to 239 (QGCL…RCLA), and 241 to 304 (EVCP…YCIK). Disulfide bonds link cysteine 57/cysteine 99, cysteine 85/cysteine 117, cysteine 122/cysteine 165, cysteine 147/cysteine 177, cysteine 180/cysteine 224, cysteine 210/cysteine 237, cysteine 243/cysteine 289, and cysteine 274/cysteine 302. 2 N-linked (GlcNAc...) asparagine glycosylation sites follow: asparagine 104 and asparagine 134. An N-linked (GlcNAc...) asparagine glycan is attached at asparagine 192. A helical membrane pass occupies residues 320–340 (WKIVAFTATSVLLVLLLVILA). The Cytoplasmic portion of the chain corresponds to 341-490 (RMFQTKFKAH…DEIPLMEEDP (150 aa)). A disordered region spans residues 394-490 (YPASVGQGCP…DEIPLMEEDP (97 aa)). Polar residues-rich tracts occupy residues 430–444 (CDST…QSLY) and 461–475 (DTIS…STSP). Acidic residues predominate over residues 479–490 (IADEIPLMEEDP).

High expression in brain and eye, with weaker expression in spinal cord and testis. Detected in white matter of brain and in the outer segments of photoreceptors.

The protein localises to the membrane. Acts as a complement inhibitor by disrupting the formation of the classical C3 convertase. Isoform 3 inhibits the classical complement pathway, while membrane-bound isoform 1 inhibits deposition of C3b via both the classical and alternative complement pathways. This is Sushi domain-containing protein 4 (Susd4) from Mus musculus (Mouse).